Here is a 289-residue protein sequence, read N- to C-terminus: Methionyl-tRNA formyltransferase (289 aa).

Residue S106–P109 participates in (6S)-5,6,7,8-tetrahydrofolate binding.

It belongs to the Fmt family.

The catalysed reaction is L-methionyl-tRNA(fMet) + (6R)-10-formyltetrahydrofolate = N-formyl-L-methionyl-tRNA(fMet) + (6S)-5,6,7,8-tetrahydrofolate + H(+). Attaches a formyl group to the free amino group of methionyl-tRNA(fMet). The formyl group appears to play a dual role in the initiator identity of N-formylmethionyl-tRNA by promoting its recognition by IF2 and preventing the misappropriation of this tRNA by the elongation apparatus. This is Methionyl-tRNA formyltransferase from Mycoplasmopsis pulmonis (strain UAB CTIP) (Mycoplasma pulmonis).